Consider the following 216-residue polypeptide: Urease operon 23 kDa accessory protein (216 aa).

In terms of biological role, involved in the expression of hydrogenase activity. May be a regulatory gene affecting the expression of the hydrogenase operon or could be involved in the process of nickel incorporation into the hydrogenase apoenzyme. The polypeptide is Urease operon 23 kDa accessory protein (Rhizobium meliloti (strain 1021) (Ensifer meliloti)).